Consider the following 434-residue polypeptide: Progestin and adipoQ receptor-like protein 1 (434 aa).

Residues 1 to 201 (MNPDEVNRAL…KSIWSLHTET (201 aa)) are Cytoplasmic-facing. 2 disordered regions span residues 74–103 (LPQQ…MPKH) and 118–137 (EINL…ELEV). A helical membrane pass occupies residues 202–222 (GNIWTHLIGCVAFFFLACWFL). Over 223–234 (TRPDNHIQFQEK) the chain is Extracellular. The helical transmembrane segment at 235–255 (VVFSFFFAGAVLCLGLSFAFH) threads the bilayer. At 256–273 (TLSCHSVNVVKIFCKLDY) the chain is on the cytoplasmic side. The chain crosses the membrane as a helical span at residues 274–294 (MGISLLIIGSFIPWIYYGFYC). The Extracellular segment spans residues 295–299 (RREPK). The chain crosses the membrane as a helical span at residues 300-320 (ITYIAMVSVLGIGAIVVSLWD). At 321 to 331 (KFSESRFRPIR) the chain is on the cytoplasmic side. The helical transmembrane segment at 332 to 352 (AAVFVGMGCSGVIPTIHYIIT) threads the bilayer. Topologically, residues 353–362 (DGVHSLFADN) are extracellular. Residues 363–383 (SFHWLLLMAFLYLLGAGLYAT) form a helical membrane-spanning segment. The Cytoplasmic portion of the chain corresponds to 384–403 (RTPERFFPGKCDIWFQSHQL). Residues 404–424 (FHTCVVIAAFVHYYGISEMAF) traverse the membrane as a helical segment. Residues 425–434 (ARLNEQCPVR) are Extracellular-facing.

This sequence belongs to the ADIPOR family.

Its subcellular location is the membrane. In terms of biological role, probable receptor, which may be involved in metabolic pathways that regulate lipid metabolism such as fatty acid oxidation. In Caenorhabditis elegans, this protein is Progestin and adipoQ receptor-like protein 1 (paqr-1).